The sequence spans 292 residues: NAD kinase (292 aa).

Asp-73 (proton acceptor) is an active-site residue. NAD(+) is bound by residues 73 to 74 (DG), 147 to 148 (NE), His-158, Arg-175, Asp-177, 188 to 193 (TAYSLS), and Gln-247.

It belongs to the NAD kinase family. A divalent metal cation is required as a cofactor.

The protein resides in the cytoplasm. It carries out the reaction NAD(+) + ATP = ADP + NADP(+) + H(+). Functionally, involved in the regulation of the intracellular balance of NAD and NADP, and is a key enzyme in the biosynthesis of NADP. Catalyzes specifically the phosphorylation on 2'-hydroxyl of the adenosine moiety of NAD to yield NADP. The polypeptide is NAD kinase (Salmonella choleraesuis (strain SC-B67)).